The sequence spans 139 residues: Small ribosomal subunit protein uS12 (139 aa).

The tract at residues Met-1 to Pro-55 is disordered. Residues Lys-32–Gln-42 show a composition bias toward polar residues.

Belongs to the universal ribosomal protein uS12 family. As to quaternary structure, part of the 30S ribosomal subunit. Contacts proteins S8 and S17. May interact with IF1 in the 30S initiation complex.

In terms of biological role, with S4 and S5 plays an important role in translational accuracy. Interacts with and stabilizes bases of the 16S rRNA that are involved in tRNA selection in the A site and with the mRNA backbone. Located at the interface of the 30S and 50S subunits, it traverses the body of the 30S subunit contacting proteins on the other side and probably holding the rRNA structure together. The combined cluster of proteins S8, S12 and S17 appears to hold together the shoulder and platform of the 30S subunit. The sequence is that of Small ribosomal subunit protein uS12 from Halalkalibacterium halodurans (strain ATCC BAA-125 / DSM 18197 / FERM 7344 / JCM 9153 / C-125) (Bacillus halodurans).